Consider the following 172-residue polypeptide: NADH-quinone oxidoreductase subunit B (172 aa).

[4Fe-4S] cluster is bound by residues cysteine 46, cysteine 47, cysteine 111, and cysteine 141.

The protein belongs to the complex I 20 kDa subunit family. As to quaternary structure, NDH-1 is composed of 14 different subunits. Subunits NuoB, C, D, E, F, and G constitute the peripheral sector of the complex. The cofactor is [4Fe-4S] cluster.

Its subcellular location is the cell membrane. It carries out the reaction a quinone + NADH + 5 H(+)(in) = a quinol + NAD(+) + 4 H(+)(out). In terms of biological role, NDH-1 shuttles electrons from NADH, via FMN and iron-sulfur (Fe-S) centers, to quinones in the respiratory chain. The immediate electron acceptor for the enzyme in this species is believed to be a menaquinone. Couples the redox reaction to proton translocation (for every two electrons transferred, four hydrogen ions are translocated across the cytoplasmic membrane), and thus conserves the redox energy in a proton gradient. This is NADH-quinone oxidoreductase subunit B from Brevibacillus brevis (strain 47 / JCM 6285 / NBRC 100599).